The primary structure comprises 554 residues: Nonribosomal peptide synthetase ALT12 (554 aa).

The Carrier domain occupies 1 to 76 (MASLEHMKRI…TLWEAMNDTQ (76 aa)). At S35 the chain carries O-(pantetheine 4'-phosphoryl)serine. Residues 124 to 434 (VQDNVLCVAP…QRIQNEITST (311 aa)) are condensation.

The protein belongs to the NRP synthetase family.

It functions in the pathway mycotoxin biosynthesis. Its function is as follows. Nonribosomal peptide synthetase; part of the gene cluster that mediates the biosynthesis of the host-selective toxins (HSTs) AAL-toxins, sphinganine-analog mycotoxins responsible for Alternaria stem canker on tomato by the tomato pathotype. The biosynthesis starts with the polyketide synthase ALT1-catalyzed C-16 carbon chain assembly from one starter acetyl-CoA unit with malonyl-CoA extender units. ALT1 also selectively transfers methyl groups at the first and the third cycle of chain elongation for AAL toxin. The C-16 polyketide chain is released from the enzyme by a nucleophilic attack of a carbanion, which is derived from R-carbon of glycin by decarboxylation, on the carbonyl carbon of polyketide acyl chain. This step is probably catalyzed by a pyridoxal 5'-phosphate-dependent aminoacyl transferase ALT4. The respective functions of the other enzymes encoded by the cluster have still to be elucidated. The sphingosine N-acyltransferase-like protein ALT7 seems not to act as a resistance/self-tolerance factor against the toxin in the toxin biosynthetic gene cluster, contrary to what is expected. This Alternaria alternata (Alternaria rot fungus) protein is Nonribosomal peptide synthetase ALT12.